The primary structure comprises 355 residues: MSGQPKRLMVMAGGTGGHVFPGLAVAHHLMAQGWQVRWLGTSDRMEADLVPKHGIDIDFIRISGLRGKGVKALLAAPLRIFNAWRQARAIMKRFKPDVVLGMGGYVSGPGGLAAWSLGIPVVLHEQNGIAGLTNQWLAKIATTVMQAFPGAFPNAEVVGNPVRTDVLALPLPQVRLAGRDGPIRVLVVGGSQGARVLNQTMPQVAARLGDTVTIWHQSGKGAQLTVEQAYAGAGQPQHKVTEFIDGMAAAYAWADVVVCRSGALTVSEIAAAGLPAIFVPFQHKDRQQYWNALPLENAGAAKIFEQPQFTVEAVADTLAGWSREALLTMAERARAVSIPDATERVASEVSRVART.

Residues 15–17 (TGG), N127, R163, S191, I244, 263–268 (ALTVSE), and Q288 each bind UDP-N-acetyl-alpha-D-glucosamine.

This sequence belongs to the glycosyltransferase 28 family. MurG subfamily.

It localises to the cell inner membrane. The enzyme catalyses di-trans,octa-cis-undecaprenyl diphospho-N-acetyl-alpha-D-muramoyl-L-alanyl-D-glutamyl-meso-2,6-diaminopimeloyl-D-alanyl-D-alanine + UDP-N-acetyl-alpha-D-glucosamine = di-trans,octa-cis-undecaprenyl diphospho-[N-acetyl-alpha-D-glucosaminyl-(1-&gt;4)]-N-acetyl-alpha-D-muramoyl-L-alanyl-D-glutamyl-meso-2,6-diaminopimeloyl-D-alanyl-D-alanine + UDP + H(+). It participates in cell wall biogenesis; peptidoglycan biosynthesis. Functionally, cell wall formation. Catalyzes the transfer of a GlcNAc subunit on undecaprenyl-pyrophosphoryl-MurNAc-pentapeptide (lipid intermediate I) to form undecaprenyl-pyrophosphoryl-MurNAc-(pentapeptide)GlcNAc (lipid intermediate II). The polypeptide is UDP-N-acetylglucosamine--N-acetylmuramyl-(pentapeptide) pyrophosphoryl-undecaprenol N-acetylglucosamine transferase (Salmonella typhi).